The sequence spans 68 residues: Serine rich endogenous peptide 13 (68 aa).

Positions methionine 1–alanine 31 are cleaved as a signal peptide. A disordered region spans residues arginine 33–proline 68. The span at glutamine 37 to tyrosine 47 shows a compositional bias: basic and acidic residues. The span at proline 48–leucine 57 shows a compositional bias: pro residues. The SCOOP motif signature appears at proline 54 to proline 68. The SxS motif essential for MIK2 binding signature appears at serine 60 to serine 62.

It belongs to the serine rich endogenous peptide (SCOOP) phytocytokine family. Interacts with MIK2 (via extracellular leucine-rich repeat domain); this interaction triggers the formation of complex between MIK2 and the BAK1/SERK3 and SERK4 coreceptors, and subsequent BAK1 activation by phosphorylation. As to expression, mostly expressed in stems and flowers and, to a lower extent, in seedlings shoots, roots, siliques, seeds and leaves.

The protein resides in the cell membrane. It localises to the secreted. The protein localises to the extracellular space. Its subcellular location is the apoplast. Functionally, brassicaceae-specific phytocytokine (plant endogenous peptide released into the apoplast) perceived by MIK2 in a BAK1/SERK3 and SERK4 coreceptors-dependent manner, that modulates various physiological and antimicrobial processes including growth prevention and reactive oxygen species (ROS) response regulation. Promotes the expression of immune-related marker genes (e.g. WRKY30, WRKY33 and CYP81F2) in a MIK2-dependent manner. Inhibits root growth and regulates root meristems. Prevents general growth and development. Exhibits antibacterial effects against Pseudomonas syringae pv. tomato DC3000, Ralstonia solanacearum, Bacillus subtilis and Agrobacterium tumefaciens, thus being an antimicrobial peptide (AMP). The protein is Serine rich endogenous peptide 13 of Arabidopsis thaliana (Mouse-ear cress).